The primary structure comprises 337 residues: Mediator of RNA polymerase II transcription subunit 19 (337 aa).

Disordered stretches follow at residues 1-38, 155-234, and 297-337; these read MMSN…KTTI, YVTP…LPGG, and QMSS…MSQF. Residues 28–38 show a composition bias toward polar residues; sequence QDSSGTLKTTI. 2 stretches are compositionally biased toward basic residues: residues 159 to 171 and 208 to 221; these read ARKH…KQKH and RKKR…KKKN. The stretch at 189 to 223 forms a coiled coil; the sequence is LETYEKKHKKQKRHEDDKERKKRKKEKKRKKKNQS. The span at 297–309 shows a compositional bias: low complexity; that stretch reads QMSSGGLLGSVLG. A compositionally biased stretch (gly residues) spans 310–330; it reads TSGGPGGGGGGGGGGGGGVGG.

This sequence belongs to the Mediator complex subunit 19 family. Component of the Mediator complex.

The protein localises to the nucleus. Component of the Mediator complex, a coactivator involved in the regulated transcription of nearly all RNA polymerase II-dependent genes. Mediator functions as a bridge to convey information from gene-specific regulatory proteins to the basal RNA polymerase II transcription machinery. Mediator is recruited to promoters by direct interactions with regulatory proteins and serves as a scaffold for the assembly of a functional preinitiation complex with RNA polymerase II and the general transcription factors. The chain is Mediator of RNA polymerase II transcription subunit 19 (MED19) from Drosophila melanogaster (Fruit fly).